The primary structure comprises 340 residues: DNA-directed RNA polymerase subunit alpha (340 aa).

The alpha N-terminal domain (alpha-NTD) stretch occupies residues 1–233; the sequence is MIQNEIPIPA…NLFIPLLHEK (233 aa). The segment at 263–340 is alpha C-terminal domain (alpha-CTD); it reads RKEISFKHIF…LPKNKFSIND (78 aa).

It belongs to the RNA polymerase alpha chain family. In plastids the minimal PEP RNA polymerase catalytic core is composed of four subunits: alpha, beta, beta', and beta''. When a (nuclear-encoded) sigma factor is associated with the core the holoenzyme is formed, which can initiate transcription.

It localises to the plastid. Its subcellular location is the chloroplast. It carries out the reaction RNA(n) + a ribonucleoside 5'-triphosphate = RNA(n+1) + diphosphate. DNA-dependent RNA polymerase catalyzes the transcription of DNA into RNA using the four ribonucleoside triphosphates as substrates. The protein is DNA-directed RNA polymerase subunit alpha (rpoA) of Anthoceros angustus (Hornwort).